The primary structure comprises 405 residues: Sesquiterpene synthase 16 (405 aa).

Mg(2+) contacts are provided by aspartate 155, aspartate 159, and glutamate 309. The DDXXD motif signature appears at 155–159 (DDTYD).

It belongs to the terpene synthase family. Tpsa subfamily. Mg(2+) is required as a cofactor. Requires Mn(2+) as cofactor.

It functions in the pathway secondary metabolite biosynthesis; terpenoid biosynthesis. In terms of biological role, sesquiterpene synthase involved in the biosynthesis of volatile compounds. No activity detected with geranyl diphosphate (GPP) and farnesyl diphosphate (FPP) as substrates. This Solanum habrochaites (Wild tomato) protein is Sesquiterpene synthase 16.